The primary structure comprises 83 residues: MKGMIMLISCLMLIDVVVESKNGYIIEPKGCKYSCSWGSSTWCNRECKFKKGSSGYCAWPACWCYGLPDNVKIFDYYNNKCGK.

A signal peptide spans 1-20 (MKGMIMLISCLMLIDVVVES). In terms of domain architecture, LCN-type CS-alpha/beta spans 21 to 82 (KNGYIIEPKG…IFDYYNNKCG (62 aa)). 4 disulfides stabilise this stretch: Cys-31-Cys-81, Cys-35-Cys-57, Cys-43-Cys-62, and Cys-47-Cys-64. A Cysteine amide modification is found at Cys-81.

It belongs to the long (4 C-C) scorpion toxin superfamily. Sodium channel inhibitor family. Beta subfamily. Expressed by the venom gland.

It is found in the secreted. In terms of biological role, inhibits the sodium currents (Nav) in an apparent irreversible manner. Produces small depolarization and induces repetitive firing in squid axons. Is specific for arthropods (crickets, triatomides, crabs and squids), but is non-toxic to mice. In Tityus discrepans (Venezuelan scorpion), this protein is Toxin TdNa3.